The primary structure comprises 618 residues: Probable Xaa-Pro aminopeptidase P (618 aa).

Residues Asp414, Asp425, Glu523, and Glu537 each contribute to the Mn(2+) site.

This sequence belongs to the peptidase M24B family. The cofactor is Mn(2+).

It catalyses the reaction Release of any N-terminal amino acid, including proline, that is linked to proline, even from a dipeptide or tripeptide.. Its function is as follows. Catalyzes the removal of a penultimate prolyl residue from the N-termini of peptides. The sequence is that of Probable Xaa-Pro aminopeptidase P (AMPP) from Metarhizium acridum (strain CQMa 102).